A 431-amino-acid chain; its full sequence is Tol-Pal system protein TolB (431 aa).

Positions 1–26 are cleaved as a signal peptide; that stretch reads MSLMTKLGFRALVASCLITAGSAANA. The disordered stretch occupies residues 406-431; that stretch reads DGSAPPQILSVQGGSVREPSWGPFMQ.

It belongs to the TolB family. In terms of assembly, the Tol-Pal system is composed of five core proteins: the inner membrane proteins TolA, TolQ and TolR, the periplasmic protein TolB and the outer membrane protein Pal. They form a network linking the inner and outer membranes and the peptidoglycan layer.

It localises to the periplasm. In terms of biological role, part of the Tol-Pal system, which plays a role in outer membrane invagination during cell division and is important for maintaining outer membrane integrity. The polypeptide is Tol-Pal system protein TolB (Burkholderia cenocepacia (strain HI2424)).